Reading from the N-terminus, the 61-residue chain is Metallothionein-2 (61 aa).

Met1 carries the post-translational modification N-acetylmethionine. The tract at residues 1–29 is beta; that stretch reads MDPNCSCAAGDSCTCAGSCKCKECKCTSC. A divalent metal cation-binding residues include Cys5, Cys7, Cys13, Cys15, Cys19, Cys21, Cys24, Cys26, Cys29, Cys33, Cys34, Cys36, Cys37, Cys41, Cys44, Cys48, Cys50, and Cys57. The tract at residues 30 to 61 is alpha; the sequence is KKSCCSCCPVGCAKCAQGCICKGASDKCSCCA. Ser58 bears the Phosphoserine mark. 2 residues coordinate a divalent metal cation: Cys59 and Cys60.

This sequence belongs to the metallothionein superfamily. Type 1 family. Interacts with EOLA1.

Functionally, metallothioneins have a high content of cysteine residues that bind various heavy metals; these proteins are transcriptionally regulated by both heavy metals and glucocorticoids. The polypeptide is Metallothionein-2 (Homo sapiens (Human)).